A 767-amino-acid chain; its full sequence is MTISPPERGSTAKSQVEKVDNPATFELFGKPGHFDRALAKGPKTTTWVWNLHANAHDFDSHTSDLEEVSRKIFSAHFGHLAVIFIWLSGAFFHGARFSNFSGWLADPTHVKPSAQVVWPVFGQEILNGDMGAGFQGIQITSGLFHVWRAWGITNETQLMSLAIGALVMAGLMLNAGVFHYHKAAPKLEWFQNVESMLNHHLAGLLGLGSLSWTGHLLHVSLPTTKLMDAIDAGQPLVLNGKTIASVADIPLPHEFFNQDLIAQLYPGFGAGIGAFFSGDWAAYSDFLTFKGGINPVTGSMWMSDIAHHHLAIAVLFIVAGHMYRTNWGIGHSIKEILEGQKGDPLLFPATKGHDGLFEFMTTSWHAQLGVNLAMLGSLSIIVAQHMYAMPPYPYMAIDYPTQIGLFTHHMWIGGFLIVGAAAHAAIAMIRDYDPAKHVDNVLDRVLKARDAIISHLNWVCIWLGAHSFGLYVHNDTMRALGRPQDMFSDSAISIQPVFAQWIQGIHAGAAGSTAPNALAGVSEVFNGSTIAVGGKVAAAAIPLGTADFMVHHIHAFTIHVTVLILLKGVLYARSSRLVPDKANLGFRFPCDGPGRGGTCQVSAWDHVFLGLFWMYNSLSVVIFHFSWKMQSDVWGTVNADGSVQHITNGNFANSAITINGWLRDFLWAQAAQVINSYGSNTSAYGLMFLGAHFVWAFSLMFLFSGRGYWQELIESIVWAHNKLKVAPAIQPRALSITQGRAVGVAHYLLGGIATTWAFFHAHILVVG.

The next 8 helical transmembrane spans lie at 72-95 (IFSA…FHGA), 158-181 (LMSL…FHYH), 197-221 (LNHH…HVSL), 305-323 (IAHH…GHMY), 364-387 (WHAQ…QHMY), 403-429 (IGLF…IAMI), 451-473 (AIIS…LYVH), and 548-566 (FMVH…LILL). 2 residues coordinate [4Fe-4S] cluster: cysteine 590 and cysteine 599. The next 2 membrane-spanning stretches (helical) occupy residues 606–627 (HVFL…HFSW) and 681–703 (TSAY…MFLF). Histidine 692 lines the chlorophyll a' pocket. The chlorophyll a site is built by methionine 700 and tyrosine 708. Tryptophan 709 is a phylloquinone binding site. Residues 741–761 (AVGVAHYLLGGIATTWAFFHA) traverse the membrane as a helical segment.

It belongs to the PsaA/PsaB family. In terms of assembly, the PsaA/B heterodimer binds the P700 chlorophyll special pair and subsequent electron acceptors. PSI consists of a core antenna complex that captures photons, and an electron transfer chain that converts photonic excitation into a charge separation. The cyanobacterial PSI reaction center is composed of one copy each of PsaA,B,C,D,E,F,I,J,K,L,M and X, and forms trimeric complexes. It depends on PSI electron transfer chain: 5 chlorophyll a, 1 chlorophyll a', 2 phylloquinones and 3 4Fe-4S clusters. PSI core antenna: 90 chlorophyll a, 22 carotenoids, 3 phospholipids and 1 galactolipid. P700 is a chlorophyll a/chlorophyll a' dimer, A0 is one or more chlorophyll a, A1 is one or both phylloquinones and FX is a shared 4Fe-4S iron-sulfur center. as a cofactor.

It localises to the cellular thylakoid membrane. It catalyses the reaction reduced [plastocyanin] + hnu + oxidized [2Fe-2S]-[ferredoxin] = oxidized [plastocyanin] + reduced [2Fe-2S]-[ferredoxin]. PsaA and PsaB bind P700, the primary electron donor of photosystem I (PSI), as well as the electron acceptors A0, A1 and FX. PSI is a plastocyanin/cytochrome c6-ferredoxin oxidoreductase, converting photonic excitation into a charge separation, which transfers an electron from the donor P700 chlorophyll pair to the spectroscopically characterized acceptors A0, A1, FX, FA and FB in turn. Oxidized P700 is reduced on the lumenal side of the thylakoid membrane by plastocyanin or cytochrome c6. The protein is Photosystem I P700 chlorophyll a apoprotein A1 of Synechococcus sp. (strain CC9311).